Reading from the N-terminus, the 419-residue chain is Serine/threonine-protein kinase Kist (419 aa).

Residues 23 to 304 (WQVQSRLGSG…AEMALCSPFF (282 aa)) form the Protein kinase domain. ATP contacts are provided by residues 29–37 (LGSGSSASV) and K54. Active-site proton acceptor residues include D141 and D158. One can recognise an RRM domain in the interval 324–406 (RLLNVLDDDY…KFVVATFYPL (83 aa)).

It belongs to the protein kinase superfamily. Ser/Thr protein kinase family. As to quaternary structure, interacts with stathmin and CDKN1B/p27Kip1 Interacts with PAM. In the embryo, preferentially expressed in the developing nervous system.

The protein localises to the cytoplasm. It is found in the nucleus. The catalysed reaction is L-seryl-[protein] + ATP = O-phospho-L-seryl-[protein] + ADP + H(+). It catalyses the reaction L-threonyl-[protein] + ATP = O-phospho-L-threonyl-[protein] + ADP + H(+). Its function is as follows. Upon serum stimulation, phosphorylates CDKN1B/p27Kip1, thus controlling CDKN1B subcellular location and cell cycle progression in G1 phase. May be involved in trafficking and/or processing of RNA. The chain is Serine/threonine-protein kinase Kist (Uhmk1) from Rattus norvegicus (Rat).